We begin with the raw amino-acid sequence, 448 residues long: Putative F-box/LRR-repeat protein At3g44810 (448 aa).

The F-box domain maps to 6–54 (TASLNCLPDELLVHVLSSLETKQAASTSVLSKRWRTLFAVRRNLDFDDS). LRR repeat units lie at residues 117–141 (VSELHLCLTSVTRRLHRFPSNVFRS), 143–165 (TLVKLTLGTNLFIVYFPSDTCLP), 190–213 (CPALEDLTIDQKSFPGLPNVVSSK), 228–251 (FDWFRTVALDTPNLVTLLYSTYAR), 290–313 (VRNVQMLHLTSSATEVISQCCKGG), and 421–443 (IVDSKKVQLTEDLMKLPSASSRL).

The sequence is that of Putative F-box/LRR-repeat protein At3g44810 from Arabidopsis thaliana (Mouse-ear cress).